The following is a 432-amino-acid chain: Acyl-CoA dehydrogenase AFT10-1 (432 aa).

This sequence belongs to the acyl-CoA dehydrogenase family. It depends on FAD as a cofactor.

It functions in the pathway mycotoxin biosynthesis. Acyl-CoA dehydrogenase; part of the gene clusters that mediate the biosynthesis of the host-selective toxins (HSTs) AF-toxins responsible for Alternaria black spot of strawberry disease by the strawberry pathotype. AF-toxin I and III are valine derivatives of 2,3-dyhydroxy-isovaleric acid and 2-hydroxy-isovaleric acid respectively, while AF II is an isoleucine derivative of 2-hydroxy-valeric acid. These derivatives are bound to a 9,10-epoxy-8-hydroxy-9-methyl-decatrienoic acid (EDA) moiety. On cellular level, AF-toxins affect plasma membrane of susceptible cells and cause a sudden increase in loss of K(+) after a few minutes of toxin treatment. The aldo-keto reductase AFTS1 catalyzes the conversion of 2-keto-isovaleric acid (2-KIV) to 2-hydroxy-isovaleric acid (2-HIV) by reduction of its ketone to an alcohol. The acyl-CoA ligase AFT1, the hydrolase AFT2 and the enoyl-CoA hydratases AFT3 and AFT6, but also the polyketide synthase AFT9, the acyl-CoA dehydrogenase AFT10, the cytochrome P450 monooxygenase AFT11 and the oxidoreductase AFT12 are all involved in the biosynthesis of the AK-, AF- and ACT-toxin common EDA structural moiety. The exact function of each enzyme, and of additional enzymes identified within the AF-toxin clusters have still to be determined. This chain is Acyl-CoA dehydrogenase AFT10-1, found in Alternaria alternata (Alternaria rot fungus).